Consider the following 361-residue polypeptide: Monodechloroaminopyrrolnitrin synthase PrnB (361 aa).

Substrate is bound at residue 222–225; sequence PGAV. His313 contacts heme. Substrate contacts are provided by Tyr321 and Ser332.

Belongs to the PrnB family. As to quaternary structure, monomer. Requires heme b as cofactor.

It catalyses the reaction 7-chloro-L-tryptophan + AH2 + O2 = monodechloroaminopyrrolnitrin + A + CO2 + 2 H2O. It participates in antibiotic biosynthesis. In terms of biological role, involved in the biosynthesis of the antifungal antibiotic pyrrolnitrin. Catalyzes the ring rearrangement and decarboxylation to convert 7-chloro-L-tryptophan (7-CLT) to monodechloroaminopyrrolnitrin (MDA). It can also use 7-chloro-D-tryptophan, but 7-chloro-L-tryptophan is the preferred natural enantiomer. This chain is Monodechloroaminopyrrolnitrin synthase PrnB (prnB), found in Pseudomonas fluorescens.